Here is a 540-residue protein sequence, read N- to C-terminus: Putative sel1-like repeat-containing protein R815 (540 aa).

6 Sel1-like repeats span residues 129–164 (IDAQTNYGLVNEYGIGVKKNIKKAIKWYKLSCYKEN), 165–200 (LFGLLFLGSLYERGYGVSCDKHMAFNLYEKATKHNY), 201–236 (PAVKRQLAFMYRTGSGTTKNINKSHELYREAANQGY), 237–272 (PLAQYALALQCKYGHGCIKNYKEAETWLIRSYNNGC), 273–308 (LYATYSLARLYIETKSPLRNYSRAFELMQEAASENY), and 309–344 (LLAINYLAKIYKNGIGVNKNISRAIYWYYKAGNSTK).

The chain is Putative sel1-like repeat-containing protein R815 from Acanthamoeba polyphaga (Amoeba).